The following is a 524-amino-acid chain: Probable aminopeptidase NPEPL1 (524 aa).

2 residues coordinate Zn(2+): K260 and D265. K272 is a catalytic residue. Residues D283, D342, and E344 each contribute to the Zn(2+) site. R346 is an active-site residue.

This sequence belongs to the peptidase M17 family. Zn(2+) serves as cofactor. The cofactor is Mn(2+).

Its function is as follows. Probably catalyzes the removal of unsubstituted N-terminal amino acids from various peptides. The sequence is that of Probable aminopeptidase NPEPL1 (Npepl1) from Mus musculus (Mouse).